A 310-amino-acid polypeptide reads, in one-letter code: Beta-ketoacyl-[acyl-carrier-protein] synthase III (310 aa).

Catalysis depends on residues cysteine 112 and histidine 235. The interval 236 to 240 is ACP-binding; that stretch reads QANIR. Residue asparagine 265 is part of the active site.

Belongs to the thiolase-like superfamily. FabH family. In terms of assembly, homodimer.

It is found in the cytoplasm. The enzyme catalyses malonyl-[ACP] + acetyl-CoA + H(+) = 3-oxobutanoyl-[ACP] + CO2 + CoA. It participates in lipid metabolism; fatty acid biosynthesis. Its function is as follows. Catalyzes the condensation reaction of fatty acid synthesis by the addition to an acyl acceptor of two carbons from malonyl-ACP. Catalyzes the first condensation reaction which initiates fatty acid synthesis and may therefore play a role in governing the total rate of fatty acid production. Possesses both acetoacetyl-ACP synthase and acetyl transacylase activities. Its substrate specificity determines the biosynthesis of branched-chain and/or straight-chain of fatty acids. This is Beta-ketoacyl-[acyl-carrier-protein] synthase III from Geobacillus kaustophilus (strain HTA426).